We begin with the raw amino-acid sequence, 196 residues long: UMP-CMP kinase (196 aa).

13 to 18 provides a ligand contact to ATP; sequence GAGKGT. Residue Ser-33 is modified to Phosphoserine. Residues 33–63 form an NMP region; sequence SAGELLRDERKNPDSQYGELIEKYIKEGKIV. A ribonucleoside 5'-phosphate is bound at residue Arg-39. 2 positions are modified to N6-acetyllysine: Lys-43 and Lys-55. 61–63 contacts a ribonucleoside 5'-phosphate; the sequence is KIV. Residue Lys-73 forms a Glycyl lysine isopeptide (Lys-Gly) (interchain with G-Cter in SUMO2) linkage. Residue 93 to 96 coordinates a ribonucleoside 5'-phosphate; the sequence is GFPR. Asn-100 provides a ligand contact to CMP. At Lys-106 the chain carries N6-succinyllysine. An LID region spans residues 133-143; sequence ERGKSSGRSDD. Arg-134 provides a ligand contact to ATP. Residues Arg-140 and Arg-151 each coordinate a ribonucleoside 5'-phosphate. Lys-179 serves as a coordination point for ATP. Position 180 is a phosphoserine (Ser-180).

This sequence belongs to the adenylate kinase family. UMP-CMP kinase subfamily. As to quaternary structure, monomer. Mg(2+) serves as cofactor. Ubiquitously expressed.

It is found in the nucleus. It localises to the cytoplasm. It catalyses the reaction CMP + ATP = CDP + ADP. The enzyme catalyses dCMP + ATP = dCDP + ADP. It carries out the reaction UMP + ATP = UDP + ADP. The catalysed reaction is a 2'-deoxyribonucleoside 5'-diphosphate + ATP = a 2'-deoxyribonucleoside 5'-triphosphate + ADP. It catalyses the reaction a ribonucleoside 5'-diphosphate + ATP = a ribonucleoside 5'-triphosphate + ADP. Functionally, catalyzes the phosphorylation of pyrimidine nucleoside monophosphates at the expense of ATP. Plays an important role in de novo pyrimidine nucleotide biosynthesis. Has preference for UMP and CMP as phosphate acceptors. Also displays broad nucleoside diphosphate kinase activity. In Homo sapiens (Human), this protein is UMP-CMP kinase.